Reading from the N-terminus, the 295-residue chain is MKTFLVFALLAVVATSTIAQMETSCIPGLERPWQEQPLPPQHTLFPQQQPFPQQQQPPFSQQQPSFLQQQPILPQLPFSQQQQPVLPQQSPFSQQQLVLPPQQQYQQVLQQQIPIVQPSVLQQLNPCKVFLQQQCNPVAMPQRLARSQMLQQSSCHVMQQQCCQQLPQIPEQSRYDVIRAITYSIILQEQQQGFVQAQQQQPQQLGQGVSQSQQQSQQQLGQCSFQQPQQQLGQQPQQQQVLQGTFLQPHQIAHLEVMTSIALRTLPTMCSVNVPLYSSTTSVPFSVGTGVGAYL.

The signal sequence occupies residues 1–20; the sequence is MKTFLVFALLAVVATSTIAQ. The segment at 30–61 is disordered; it reads ERPWQEQPLPPQHTLFPQQQPFPQQQQPPFSQ. Residues 41–61 are compositionally biased toward low complexity; it reads QHTLFPQQQPFPQQQQPPFSQ.

This sequence belongs to the gliadin/glutenin family. As to quaternary structure, disulfide-bridge linked aggregates.

Functionally, glutenins are high-molecular weight seed storage proteins of wheat endosperm. Thought to be responsible for the visco-elastic property of wheat dough. This chain is Glutenin, low molecular weight subunit PTDUCD1, found in Triticum aestivum (Wheat).